We begin with the raw amino-acid sequence, 260 residues long: Phosphatidate cytidylyltransferase (260 aa).

Helical transmembrane passes span 9–29 (IIAL…LMLF), 46–66 (MIKF…IIML), 70–90 (AGEW…FIVL), 102–122 (FMDA…FMYF), 130–150 (LRYI…AYIF), 172–192 (FFGG…FVDL), and 196–216 (IWLL…GDLV).

This sequence belongs to the CDS family.

The protein localises to the cell membrane. It carries out the reaction a 1,2-diacyl-sn-glycero-3-phosphate + CTP + H(+) = a CDP-1,2-diacyl-sn-glycerol + diphosphate. The protein operates within phospholipid metabolism; CDP-diacylglycerol biosynthesis; CDP-diacylglycerol from sn-glycerol 3-phosphate: step 3/3. The protein is Phosphatidate cytidylyltransferase (cdsA) of Staphylococcus epidermidis (strain ATCC 35984 / DSM 28319 / BCRC 17069 / CCUG 31568 / BM 3577 / RP62A).